The sequence spans 350 residues: 2-oxoglutarate and iron-dependent oxygenase domain-containing protein 2 (350 aa).

One can recognise a Fe2OG dioxygenase domain in the interval 215–309 (DSHRAFVVKY…RWNLVVWLRA (95 aa)). Residues His235, Asp237, and His290 each coordinate Fe cation. Arg300 provides a ligand contact to 2-oxoglutarate.

Belongs to the OGFOD2 family. Requires Fe(2+) as cofactor. L-ascorbate serves as cofactor.

This is 2-oxoglutarate and iron-dependent oxygenase domain-containing protein 2 (OGFOD2) from Homo sapiens (Human).